A 203-amino-acid chain; its full sequence is ESCRT-related protein CHMP1B (203 aa).

Coiled-coil stretches lie at residues 13 to 51 and 109 to 140; these read DLKF…MDGA and GNLQ…NAMA. Positions 172-203 are disordered; sequence PQPAGHAIPTKTEEKVDEDDLSRRLAELKARG. A compositionally biased stretch (basic and acidic residues) spans 192–203; that stretch reads LSRRLAELKARG.

The protein belongs to the SNF7 family. Interacts with CHMP1A and LIP5. Interacts with VPS2.2.

Its subcellular location is the cytoplasm. The protein resides in the endosome membrane. Involved in ESCRT-dependent multivesicular body (MVB) formation and sorting of endosomal cargo proteins into MVBs. Mediates the MVB sorting of the auxin carriers PIN1, PIN2 and AUX1. Required for embryonic axis establishment and seedling growth. Required for autophagic degradation of plastid proteins. Promotes the efficient sequestration of cargo from plastids into autophagosomes. Mediates the efficient delivery of autophagic plastid bodies to the vacuole, but not into the cytoplasm. The polypeptide is ESCRT-related protein CHMP1B (Arabidopsis thaliana (Mouse-ear cress)).